The primary structure comprises 72 residues: Toxin Acra II-3 (72 aa).

The LCN-type CS-alpha/beta domain maps to proline 4–lysine 67. Disulfide bonds link cysteine 18/cysteine 41, cysteine 27/cysteine 46, and cysteine 31/cysteine 48.

The protein belongs to the long (3 C-C) scorpion toxin superfamily. Sodium channel inhibitor family. Beta subfamily. Expressed by the venom gland.

It is found in the secreted. In terms of biological role, binds to sodium channels (Nav) and affects the channel activation process. This Androctonus crassicauda (Arabian fat-tailed scorpion) protein is Toxin Acra II-3.